Reading from the N-terminus, the 208-residue chain is UPF0316 protein SERP1448 (208 aa).

Transmembrane regions (helical) follow at residues 8-28 (PWLM…FLTM), 40-60 (VAAV…GLVM), and 66-86 (IQNI…GMKI).

It belongs to the UPF0316 family.

It is found in the cell membrane. In Staphylococcus epidermidis (strain ATCC 35984 / DSM 28319 / BCRC 17069 / CCUG 31568 / BM 3577 / RP62A), this protein is UPF0316 protein SERP1448.